We begin with the raw amino-acid sequence, 199 residues long: Putative acetyltransferase SAV2555 (199 aa).

This sequence belongs to the transferase hexapeptide repeat family.

The protein is Putative acetyltransferase SAV2555 of Staphylococcus aureus (strain Mu50 / ATCC 700699).